The following is a 577-amino-acid chain: F-box/TPR repeat protein pof3 (577 aa).

TPR repeat units follow at residues 6 to 39 (VKAI…EPNP), 41 to 74 (IDLF…NARN), and 76 to 108 (RGYL…VHKM). The 43-residue stretch at 138–180 (ILPREVLLCILQQLNFKSIVQCMQVCKHWRDCIKKEPSLFCCL) folds into the F-box domain.

A part of the E3 ubiquitin ligase Skp1-Cullin-1-F-box (SCF) complex. Interacts with cul1, mcl1 and skp1.

The protein resides in the mitochondrion. The protein localises to the nucleus. In terms of biological role, has a role in substrate recognition in the Skp1-Cullin-1/Cdc53-F-box (SCF) ubiquitin ligase complex. Required for the maintenance of telomere length and transcriptional silencing at the telomere. Also required for chromosome segregation. This chain is F-box/TPR repeat protein pof3 (pof3), found in Schizosaccharomyces pombe (strain 972 / ATCC 24843) (Fission yeast).